A 105-amino-acid chain; its full sequence is MTDVARPDVQACEQVRLTAWVRGRVQGVGFRWWVRARALELGLTGVARNLPDSRVEVVAEGPRERCAELLELLSGVPRHGRPGFVAGVTAEWSTARGGYSGFTQA.

One can recognise an Acylphosphatase-like domain in the interval 16-105 (RLTAWVRGRV…RGGYSGFTQA (90 aa)). Catalysis depends on residues R31 and N49.

This sequence belongs to the acylphosphatase family.

It catalyses the reaction an acyl phosphate + H2O = a carboxylate + phosphate + H(+). This Acidothermus cellulolyticus (strain ATCC 43068 / DSM 8971 / 11B) protein is Acylphosphatase (acyP).